Here is a 334-residue protein sequence, read N- to C-terminus: Probable quinone oxidoreductase (334 aa).

It belongs to the zinc-containing alcohol dehydrogenase family. Quinone oxidoreductase subfamily.

It carries out the reaction 2 a quinone + NADPH + H(+) = 2 a 1,4-benzosemiquinone + NADP(+). This Saccharomyces cerevisiae (strain ATCC 204508 / S288c) (Baker's yeast) protein is Probable quinone oxidoreductase (ZTA1).